Reading from the N-terminus, the 277-residue chain is Large ribosomal subunit protein uL2 (277 aa).

Positions V223–K277 are disordered.

Belongs to the universal ribosomal protein uL2 family. As to quaternary structure, part of the 50S ribosomal subunit. Forms a bridge to the 30S subunit in the 70S ribosome.

Its function is as follows. One of the primary rRNA binding proteins. Required for association of the 30S and 50S subunits to form the 70S ribosome, for tRNA binding and peptide bond formation. It has been suggested to have peptidyltransferase activity; this is somewhat controversial. Makes several contacts with the 16S rRNA in the 70S ribosome. This is Large ribosomal subunit protein uL2 from Azorhizobium caulinodans (strain ATCC 43989 / DSM 5975 / JCM 20966 / LMG 6465 / NBRC 14845 / NCIMB 13405 / ORS 571).